A 122-amino-acid polypeptide reads, in one-letter code: Large ribosomal subunit protein uL14 (122 aa).

The protein belongs to the universal ribosomal protein uL14 family. Part of the 50S ribosomal subunit. Forms a cluster with proteins L3 and L19. In the 70S ribosome, L14 and L19 interact and together make contacts with the 16S rRNA in bridges B5 and B8.

Functionally, binds to 23S rRNA. Forms part of two intersubunit bridges in the 70S ribosome. The protein is Large ribosomal subunit protein uL14 of Limosilactobacillus reuteri (strain DSM 20016) (Lactobacillus reuteri).